Here is a 430-residue protein sequence, read N- to C-terminus: Enolase (430 aa).

Glutamine 163 is a (2R)-2-phosphoglycerate binding site. Glutamate 205 acts as the Proton donor in catalysis. Mg(2+)-binding residues include aspartate 242, glutamate 287, and aspartate 314. (2R)-2-phosphoglycerate is bound by residues lysine 339, arginine 368, serine 369, and lysine 390. The Proton acceptor role is filled by lysine 339.

It belongs to the enolase family. It depends on Mg(2+) as a cofactor.

It localises to the cytoplasm. The protein localises to the secreted. The protein resides in the cell surface. The catalysed reaction is (2R)-2-phosphoglycerate = phosphoenolpyruvate + H2O. The protein operates within carbohydrate degradation; glycolysis; pyruvate from D-glyceraldehyde 3-phosphate: step 4/5. Functionally, catalyzes the reversible conversion of 2-phosphoglycerate (2-PG) into phosphoenolpyruvate (PEP). It is essential for the degradation of carbohydrates via glycolysis. The protein is Enolase of Bacillus velezensis (strain DSM 23117 / BGSC 10A6 / LMG 26770 / FZB42) (Bacillus amyloliquefaciens subsp. plantarum).